The sequence spans 117 residues: MNFGLRLIFLVLVLKGVLCDVKLVESGGGLVKLGGSLKLSCAASGFTFSSYYMSWVRQTPEKRLELVAAINSNGGSTYYPDTVKGRFTISRDNAKNTLYLQMSSLKSEDTALYYCAR.

An N-terminal signal peptide occupies residues 1–19 (MNFGLRLIFLVLVLKGVLC). A framework-1 region spans residues 20-49 (DVKLVESGGGLVKLGGSLKLSCAASGFTFS). The cysteines at positions 41 and 115 are disulfide-linked. The interval 50 to 54 (SYYMS) is complementarity-determining-1. Positions 55–68 (WVRQTPEKRLELVA) are framework-2. The interval 69–85 (AINSNGGSTYYPDTVKG) is complementarity-determining-2. A framework-3 region spans residues 86–117 (RFTISRDNAKNTLYLQMSSLKSEDTALYYCAR).

In Mus musculus (Mouse), this protein is Ig heavy chain V region RF.